Consider the following 280-residue polypeptide: Large ribosomal subunit protein uL2 (280 aa).

3 disordered regions span residues 1–20, 29–58, and 225–280; these read MAIR…SVSM, PEKS…GGGH, and VMNP…NKKR. A compositionally biased stretch (basic residues) spans 45-58; that stretch reads SHGHITTRHRGGGH. The segment covering 253–269 has biased composition (basic and acidic residues); it reads KEGRTRRPKRYSDDMIV. Residues 270 to 280 show a composition bias toward basic residues; it reads RRRRANKNKKR.

The protein belongs to the universal ribosomal protein uL2 family. In terms of assembly, part of the 50S ribosomal subunit. Forms a bridge to the 30S subunit in the 70S ribosome.

Its function is as follows. One of the primary rRNA binding proteins. Required for association of the 30S and 50S subunits to form the 70S ribosome, for tRNA binding and peptide bond formation. It has been suggested to have peptidyltransferase activity; this is somewhat controversial. Makes several contacts with the 16S rRNA in the 70S ribosome. In Corynebacterium efficiens (strain DSM 44549 / YS-314 / AJ 12310 / JCM 11189 / NBRC 100395), this protein is Large ribosomal subunit protein uL2.